Consider the following 282-residue polypeptide: tRNA uridine(34) hydroxylase (282 aa).

A Rhodanese domain is found at 128–222 (DGRPVVMLDT…YFEEVGGSHY (95 aa)). Cys-182 functions as the Cysteine persulfide intermediate in the catalytic mechanism.

The protein belongs to the TrhO family.

The enzyme catalyses uridine(34) in tRNA + AH2 + O2 = 5-hydroxyuridine(34) in tRNA + A + H2O. In terms of biological role, catalyzes oxygen-dependent 5-hydroxyuridine (ho5U) modification at position 34 in tRNAs. This chain is tRNA uridine(34) hydroxylase, found in Cupriavidus metallidurans (strain ATCC 43123 / DSM 2839 / NBRC 102507 / CH34) (Ralstonia metallidurans).